The sequence spans 423 residues: Serine--tRNA ligase (423 aa).

229 to 231 (TAE) is an L-serine binding site. Residue 260–262 (RKE) participates in ATP binding. An L-serine-binding site is contributed by Glu283. 347–350 (EVSS) is a binding site for ATP. Ser383 is an L-serine binding site.

The protein belongs to the class-II aminoacyl-tRNA synthetase family. Type-1 seryl-tRNA synthetase subfamily. Homodimer. The tRNA molecule binds across the dimer.

It localises to the cytoplasm. It catalyses the reaction tRNA(Ser) + L-serine + ATP = L-seryl-tRNA(Ser) + AMP + diphosphate + H(+). The catalysed reaction is tRNA(Sec) + L-serine + ATP = L-seryl-tRNA(Sec) + AMP + diphosphate + H(+). The protein operates within aminoacyl-tRNA biosynthesis; selenocysteinyl-tRNA(Sec) biosynthesis; L-seryl-tRNA(Sec) from L-serine and tRNA(Sec): step 1/1. Catalyzes the attachment of serine to tRNA(Ser). Is also able to aminoacylate tRNA(Sec) with serine, to form the misacylated tRNA L-seryl-tRNA(Sec), which will be further converted into selenocysteinyl-tRNA(Sec). The sequence is that of Serine--tRNA ligase from Chloroflexus aurantiacus (strain ATCC 29366 / DSM 635 / J-10-fl).